The primary structure comprises 455 residues: Pup--protein ligase (455 aa).

Residue Glu-12 participates in Mg(2+) binding. Arg-56 contacts ATP. Tyr-58 contacts Mg(2+). Catalysis depends on Asp-60, which acts as the Proton acceptor. Glu-66 provides a ligand contact to Mg(2+). ATP-binding residues include Thr-69 and Trp-422.

It belongs to the Pup ligase/Pup deamidase family. Pup-conjugating enzyme subfamily.

The catalysed reaction is ATP + [prokaryotic ubiquitin-like protein]-L-glutamate + [protein]-L-lysine = ADP + phosphate + N(6)-([prokaryotic ubiquitin-like protein]-gamma-L-glutamyl)-[protein]-L-lysine.. Its pathway is protein degradation; proteasomal Pup-dependent pathway. It participates in protein modification; protein pupylation. Its function is as follows. Catalyzes the covalent attachment of the prokaryotic ubiquitin-like protein modifier Pup to the proteasomal substrate proteins, thereby targeting them for proteasomal degradation. This tagging system is termed pupylation. The ligation reaction involves the side-chain carboxylate of the C-terminal glutamate of Pup and the side-chain amino group of a substrate lysine. The chain is Pup--protein ligase from Acidimicrobium ferrooxidans (strain DSM 10331 / JCM 15462 / NBRC 103882 / ICP).